A 47-amino-acid chain; its full sequence is Type II secretion system protein N (47 aa).

It belongs to the GSP N family.

It localises to the cell inner membrane. In terms of biological role, involved in a type II secretion system (T2SS, formerly general secretion pathway, GSP) for the export of proteins. The polypeptide is Type II secretion system protein N (exeN) (Aeromonas salmonicida).